The sequence spans 160 residues: MASIAVCPGSFDPVTYGHLDIIRRGANVFEQVYVCVLNNSSKQPLFTVEERCELLREVTKDIPNVTVETSQGLLIDYAKKKRAKAIIRGLRAVSDFEYEMQGTSVNRVLDESIETFFMMTNNQYSFLSSSIVKEVAKYNGPVSEFVPPEVEQALMQKFKG.

S10 contributes to the substrate binding site. ATP-binding positions include 10-11 (SF) and H18. Substrate-binding residues include K42, L74, and R88. ATP contacts are provided by residues 89-91 (GLR), E99, and 124-130 (YSFLSSS).

Belongs to the bacterial CoaD family. As to quaternary structure, homohexamer. The cofactor is Mg(2+).

The protein resides in the cytoplasm. The catalysed reaction is (R)-4'-phosphopantetheine + ATP + H(+) = 3'-dephospho-CoA + diphosphate. It participates in cofactor biosynthesis; coenzyme A biosynthesis; CoA from (R)-pantothenate: step 4/5. Reversibly transfers an adenylyl group from ATP to 4'-phosphopantetheine, yielding dephospho-CoA (dPCoA) and pyrophosphate. The sequence is that of Phosphopantetheine adenylyltransferase from Bacillus velezensis (strain DSM 23117 / BGSC 10A6 / LMG 26770 / FZB42) (Bacillus amyloliquefaciens subsp. plantarum).